We begin with the raw amino-acid sequence, 80 residues long: Exodeoxyribonuclease 7 small subunit (80 aa).

The protein belongs to the XseB family. As to quaternary structure, heterooligomer composed of large and small subunits.

It localises to the cytoplasm. It catalyses the reaction Exonucleolytic cleavage in either 5'- to 3'- or 3'- to 5'-direction to yield nucleoside 5'-phosphates.. Its function is as follows. Bidirectionally degrades single-stranded DNA into large acid-insoluble oligonucleotides, which are then degraded further into small acid-soluble oligonucleotides. The protein is Exodeoxyribonuclease 7 small subunit of Pseudomonas putida (strain ATCC 700007 / DSM 6899 / JCM 31910 / BCRC 17059 / LMG 24140 / F1).